The chain runs to 113 residues: Putative pterin-4-alpha-carbinolamine dehydratase (113 aa).

This sequence belongs to the pterin-4-alpha-carbinolamine dehydratase family.

It catalyses the reaction (4aS,6R)-4a-hydroxy-L-erythro-5,6,7,8-tetrahydrobiopterin = (6R)-L-erythro-6,7-dihydrobiopterin + H2O. The chain is Putative pterin-4-alpha-carbinolamine dehydratase from Nitrosococcus oceani (strain ATCC 19707 / BCRC 17464 / JCM 30415 / NCIMB 11848 / C-107).